A 31-amino-acid polypeptide reads, in one-letter code: Spectrin beta chain, non-erythrocytic 1 (31 aa).

Spectrin repeat units lie at residues 1 to 10 (VLLLSQDYGK), 11 to 19 (YKEVAELTR), and 20 to 31 (TQILAASYELHK). Y27 is subject to Phosphotyrosine.

Belongs to the spectrin family. Interacts with ANK2. Interacts with CPNE4 (via VWFA domain). Like erythrocyte spectrin, the spectrin-like proteins are capable to form dimers which can further associate to tetramers. Associates with the gamma-tubulin complex in brain, but not in kidney, liver, sperm, or uterus. Interacts with CAMSAP1. Can form heterodimers with SPTAN1.

Its subcellular location is the cytoplasm. The protein localises to the cytoskeleton. It is found in the myofibril. It localises to the sarcomere. The protein resides in the m line. Its subcellular location is the cytosol. The protein localises to the cell membrane. Functionally, fodrin, which seems to be involved in secretion, interacts with calmodulin in a calcium-dependent manner and is thus candidate for the calcium-dependent movement of the cytoskeleton at the membrane. Plays a critical role in central nervous system development and function. The protein is Spectrin beta chain, non-erythrocytic 1 (SPTBN1) of Capra hircus (Goat).